Reading from the N-terminus, the 344-residue chain is MIKKFSNMDYNQKRERCGQYIEALEEERRKIHVFQRELPLCLDLVTQAIEACKRELPEMTTENMYGQPECSEQTTGECGPVLEQFLTIKDSSTSNEEEDEEFDDEHGNHDPDNDSEDKNTKSDWLKSVQLWNQPDHPLLPKEERLQQETMTRDESMRKDPMVNGGEGRKREAEKDGGGGRKQRRCWSSQLHRRFLNALQHLGGPHVATPKQIREFMKVDGLTNDEVKSHLQKYRLHTRRPRQTVPNNGNSQTQHFVVVGGLWVPQSDYSTGKTTGGATTSSTTTTTGIYGTMAAPPPPQWPSHSNYRPSIIVDEGSGSHSEGVVVRCSSPAMSSSTRNHYVKNN.

Residues 88 to 184 (IKDSSTSNEE…DGGGGRKQRR (97 aa)) are disordered. A compositionally biased stretch (acidic residues) spans 95–104 (NEEEDEEFDD). Basic and acidic residues-rich tracts occupy residues 105–124 (EHGN…KSDW) and 138–178 (LLPK…DGGG). In terms of domain architecture, HTH myb-type spans 178 to 238 (GGRKQRRCWS…HLQKYRLHTR (61 aa)). Positions 209-234 (PKQIREFMKVDGLTNDEVKSHLQKYR) form a DNA-binding region, H-T-H motif. A compositionally biased stretch (low complexity) spans 269–291 (STGKTTGGATTSSTTTTTGIYGT). Residues 269 to 322 (STGKTTGGATTSSTTTTTGIYGTMAAPPPPQWPSHSNYRPSIIVDEGSGSHSEG) form a disordered region.

In terms of tissue distribution, expressed in the root hair region and root hair cells.

The protein resides in the nucleus. Transcription factor involved in nitrate and phosphate signaling in roots. Integrates nitrate and phosphate starvation responses and adaptation of root architecture depending on nutrient availabilities. Acts downstream of the nitrate sensor and transporter NPF6.3/NRT1.1. Represses primary root development in response to phosphate deficiency conditions, only when nitrate is present. Involved in the modulation of primary root and root hair growth in phosphate-deprived environment. May be required for suppressing abscisic acid (ABA) signaling in germinating embryo axis, which promotes the timely germination of seeds. This Arabidopsis thaliana (Mouse-ear cress) protein is Transcription factor HRS1.